The sequence spans 170 residues: Acireductone dioxygenase (170 aa).

Residues His99, His101, Glu105, and His144 each coordinate Fe(2+). Positions 99, 101, 105, and 144 each coordinate Ni(2+).

It belongs to the acireductone dioxygenase (ARD) family. As to quaternary structure, monomer. The cofactor is Fe(2+). Ni(2+) is required as a cofactor.

The enzyme catalyses 1,2-dihydroxy-5-(methylsulfanyl)pent-1-en-3-one + O2 = 3-(methylsulfanyl)propanoate + CO + formate + 2 H(+). It catalyses the reaction 1,2-dihydroxy-5-(methylsulfanyl)pent-1-en-3-one + O2 = 4-methylsulfanyl-2-oxobutanoate + formate + 2 H(+). Its pathway is amino-acid biosynthesis; L-methionine biosynthesis via salvage pathway; L-methionine from S-methyl-5-thio-alpha-D-ribose 1-phosphate: step 5/6. In terms of biological role, catalyzes 2 different reactions between oxygen and the acireductone 1,2-dihydroxy-3-keto-5-methylthiopentene (DHK-MTPene) depending upon the metal bound in the active site. Fe-containing acireductone dioxygenase (Fe-ARD) produces formate and 2-keto-4-methylthiobutyrate (KMTB), the alpha-ketoacid precursor of methionine in the methionine recycle pathway. Ni-containing acireductone dioxygenase (Ni-ARD) produces methylthiopropionate, carbon monoxide and formate, and does not lie on the methionine recycle pathway. This is Acireductone dioxygenase from Bacillus cereus (strain ZK / E33L).